The following is a 193-amino-acid chain: Holliday junction branch migration complex subunit RuvA (193 aa).

Residues 1–64 (MIGRIQGTLV…EDAQQLFGFA (64 aa)) form a domain I region. Residues 65-139 (TEIEREAFRQ…GKLAPDLGIT (75 aa)) form a domain II region. The interval 139–143 (TGGKP) is flexible linker. The tract at residues 144-193 (QAIEATSEVLQALLSLGYSEKEALLALKQIPPETSVSDGIRMGLKYLSKP) is domain III.

Belongs to the RuvA family. In terms of assembly, homotetramer. Forms an RuvA(8)-RuvB(12)-Holliday junction (HJ) complex. HJ DNA is sandwiched between 2 RuvA tetramers; dsDNA enters through RuvA and exits via RuvB. An RuvB hexamer assembles on each DNA strand where it exits the tetramer. Each RuvB hexamer is contacted by two RuvA subunits (via domain III) on 2 adjacent RuvB subunits; this complex drives branch migration. In the full resolvosome a probable DNA-RuvA(4)-RuvB(12)-RuvC(2) complex forms which resolves the HJ.

It is found in the cytoplasm. Functionally, the RuvA-RuvB-RuvC complex processes Holliday junction (HJ) DNA during genetic recombination and DNA repair, while the RuvA-RuvB complex plays an important role in the rescue of blocked DNA replication forks via replication fork reversal (RFR). RuvA specifically binds to HJ cruciform DNA, conferring on it an open structure. The RuvB hexamer acts as an ATP-dependent pump, pulling dsDNA into and through the RuvAB complex. HJ branch migration allows RuvC to scan DNA until it finds its consensus sequence, where it cleaves and resolves the cruciform DNA. This is Holliday junction branch migration complex subunit RuvA from Polynucleobacter asymbioticus (strain DSM 18221 / CIP 109841 / QLW-P1DMWA-1) (Polynucleobacter necessarius subsp. asymbioticus).